The chain runs to 309 residues: NADH-cytochrome b5 reductase 2 (309 aa).

The helical transmembrane segment at 3 to 23 threads the bilayer; sequence ILTAPVLIGVSIVVITVLYLF. Residues 48-160 enclose the FAD-binding FR-type domain; sequence SVKYPLPLIE…RGPNGLLVYN (113 aa). Residues 140–170 and 179–214 contribute to the FAD site; these read DNMKIGDTIDFRGPNGLLVYNGKGKFAIRPD and KFKHVAMIAGGTGITPMLQLIRSITADSFDETVCSL.

This sequence belongs to the flavoprotein pyridine nucleotide cytochrome reductase family. It depends on FAD as a cofactor.

It is found in the membrane. It carries out the reaction 2 Fe(III)-[cytochrome b5] + NADH = 2 Fe(II)-[cytochrome b5] + NAD(+) + H(+). Functionally, NADH-cytochrome b5 reductases are involved in desaturation and elongation of fatty acids, cholesterol biosynthesis and drug metabolism. This Danio rerio (Zebrafish) protein is NADH-cytochrome b5 reductase 2 (cyb5r2).